We begin with the raw amino-acid sequence, 61 residues long: Small ribosomal subunit protein uS14 (61 aa).

Cysteine 24, cysteine 27, cysteine 40, and cysteine 43 together coordinate Zn(2+).

Belongs to the universal ribosomal protein uS14 family. Zinc-binding uS14 subfamily. Part of the 30S ribosomal subunit. Contacts proteins S3 and S10. Zn(2+) is required as a cofactor.

Functionally, binds 16S rRNA, required for the assembly of 30S particles and may also be responsible for determining the conformation of the 16S rRNA at the A site. This Caldanaerobacter subterraneus subsp. tengcongensis (strain DSM 15242 / JCM 11007 / NBRC 100824 / MB4) (Thermoanaerobacter tengcongensis) protein is Small ribosomal subunit protein uS14.